The chain runs to 998 residues: Sensor histidine kinase AruS (998 aa).

3 disordered regions span residues 27–82, 154–198, and 224–245; these read ERRP…HARA, RQAG…LPAG, and RQHP…RQPR. Over residues 40–49 the composition is skewed to low complexity; the sequence is GEAAVRRAGL. Residues 161 to 183 are compositionally biased toward basic residues; sequence HRLHRPRTTHRHAVRRAPGRRRE. 2 helical membrane-spanning segments follow: residues 264–284 and 395–415; these read VLLF…FFEY and ASLL…SWLF. In terms of domain architecture, HAMP spans 417–473; that stretch reads SLVTRHLWRMSEFAGHIAEGDLQQPLRLDKVDRERDEIDAVAAALEDMRQALRTDRR. Residues 513 to 734 form the Histidine kinase domain; it reads TMSHEIRTPL…TFWFEIELAL (222 aa). Residue His-516 is modified to Phosphohistidine; by autocatalysis. Positions 751–869 constitute a Response regulatory domain; sequence EVLLVEDVAL…ELRRALGEVG (119 aa). At Asp-800 the chain carries 4-aspartylphosphate. The HPt domain maps to 894–987; the sequence is GRHKLAGLLG…RDGAEALRRA (94 aa). A Phosphohistidine modification is found at His-933.

In terms of processing, autophosphorylated. Activation may require a sequential transfer of a phosphate group from a His in the primary transmitter domain, to an Asp in the receiver domain and to a His in the secondary transmitter domain.

The protein resides in the cell membrane. The enzyme catalyses ATP + protein L-histidine = ADP + protein N-phospho-L-histidine.. The protein operates within amino-acid degradation; L-arginine degradation [regulation]. Its function is as follows. Member of the two-component regulatory system AruS/AruR, which is involved in the regulation of the arginine transaminase (ATA) pathway in response to exogeneous L-arginine. Probably functions as a sensor kinase that phosphorylates AruR. This Pseudomonas aeruginosa (strain ATCC 15692 / DSM 22644 / CIP 104116 / JCM 14847 / LMG 12228 / 1C / PRS 101 / PAO1) protein is Sensor histidine kinase AruS (aruS).